Consider the following 349-residue polypeptide: Selenide, water dikinase (349 aa).

Cysteine 17 is an active-site residue. ATP is bound by residues lysine 20 and 48 to 50; that span reads YFD. Aspartate 51 contributes to the Mg(2+) binding site. Residues aspartate 68, aspartate 91, and 139-141 contribute to the ATP site; that span reads GHS. Aspartate 91 contributes to the Mg(2+) binding site. Position 229 (aspartate 229) interacts with Mg(2+).

The protein belongs to the selenophosphate synthase 1 family. Class I subfamily. In terms of assembly, homodimer. Mg(2+) is required as a cofactor.

It catalyses the reaction hydrogenselenide + ATP + H2O = selenophosphate + AMP + phosphate + 2 H(+). Functionally, synthesizes selenophosphate from selenide and ATP. In Nitrosomonas eutropha (strain DSM 101675 / C91 / Nm57), this protein is Selenide, water dikinase.